Consider the following 499-residue polypeptide: Ribose import ATP-binding protein RbsA (499 aa).

ABC transporter domains follow at residues 3–240 (VEMT…VGRA) and 250–494 (LTPG…TGGD). 35-42 (GENGAGKS) contacts ATP.

The protein belongs to the ABC transporter superfamily. Ribose importer (TC 3.A.1.2.1) family. As to quaternary structure, the complex is composed of an ATP-binding protein (RbsA), two transmembrane proteins (RbsC) and a solute-binding protein (RbsB).

Its subcellular location is the cell membrane. The enzyme catalyses D-ribose(out) + ATP + H2O = D-ribose(in) + ADP + phosphate + H(+). Its function is as follows. Part of the ABC transporter complex RbsABC involved in ribose import. Responsible for energy coupling to the transport system. The protein is Ribose import ATP-binding protein RbsA of Halalkalibacterium halodurans (strain ATCC BAA-125 / DSM 18197 / FERM 7344 / JCM 9153 / C-125) (Bacillus halodurans).